Reading from the N-terminus, the 497-residue chain is Glycerol kinase (497 aa).

An ADP-binding site is contributed by Thr-11. 3 residues coordinate ATP: Thr-11, Ser-12, and Ser-13. Thr-11 is a sn-glycerol 3-phosphate binding site. An ADP-binding site is contributed by Arg-15. Residues Arg-81, Glu-82, Tyr-133, and Asp-242 each coordinate sn-glycerol 3-phosphate. Glycerol contacts are provided by Arg-81, Glu-82, Tyr-133, Asp-242, and Gln-243. 2 residues coordinate ADP: Thr-264 and Gly-307. Residues Thr-264, Gly-307, Gln-311, and Gly-412 each contribute to the ATP site. The ADP site is built by Gly-412 and Asn-416.

Belongs to the FGGY kinase family.

It catalyses the reaction glycerol + ATP = sn-glycerol 3-phosphate + ADP + H(+). It functions in the pathway polyol metabolism; glycerol degradation via glycerol kinase pathway; sn-glycerol 3-phosphate from glycerol: step 1/1. Its activity is regulated as follows. Inhibited by fructose 1,6-bisphosphate (FBP). Its function is as follows. Key enzyme in the regulation of glycerol uptake and metabolism. Catalyzes the phosphorylation of glycerol to yield sn-glycerol 3-phosphate. The polypeptide is Glycerol kinase (Variovorax paradoxus (strain S110)).